The chain runs to 37 residues: MKVRASVKRICDKCKVIRRHGRVYVICENPKHKQRQG.

The protein belongs to the bacterial ribosomal protein bL36 family.

In Thermus thermophilus (strain ATCC BAA-163 / DSM 7039 / HB27), this protein is Large ribosomal subunit protein bL36.